The sequence spans 170 residues: Adenine phosphoribosyltransferase (170 aa).

The protein belongs to the purine/pyrimidine phosphoribosyltransferase family. Homodimer.

It localises to the cytoplasm. It carries out the reaction AMP + diphosphate = 5-phospho-alpha-D-ribose 1-diphosphate + adenine. It functions in the pathway purine metabolism; AMP biosynthesis via salvage pathway; AMP from adenine: step 1/1. In terms of biological role, catalyzes a salvage reaction resulting in the formation of AMP, that is energically less costly than de novo synthesis. This chain is Adenine phosphoribosyltransferase, found in Acholeplasma laidlawii (strain PG-8A).